Reading from the N-terminus, the 88-residue chain is Small ribosomal subunit protein bS16 (88 aa).

It belongs to the bacterial ribosomal protein bS16 family.

This is Small ribosomal subunit protein bS16 from Thermus aquaticus.